We begin with the raw amino-acid sequence, 484 residues long: Glycogen synthase (484 aa).

Residue K15 coordinates ADP-alpha-D-glucose.

The protein belongs to the glycosyltransferase 1 family. Bacterial/plant glycogen synthase subfamily.

It carries out the reaction [(1-&gt;4)-alpha-D-glucosyl](n) + ADP-alpha-D-glucose = [(1-&gt;4)-alpha-D-glucosyl](n+1) + ADP + H(+). The protein operates within glycan biosynthesis; glycogen biosynthesis. Its function is as follows. Synthesizes alpha-1,4-glucan chains using ADP-glucose. The polypeptide is Glycogen synthase (Geotalea daltonii (strain DSM 22248 / JCM 15807 / FRC-32) (Geobacter daltonii)).